Consider the following 880-residue polypeptide: DNA mismatch repair protein MutS (880 aa).

625–632 is a binding site for ATP; the sequence is GPNMAGKS.

It belongs to the DNA mismatch repair MutS family.

In terms of biological role, this protein is involved in the repair of mismatches in DNA. It is possible that it carries out the mismatch recognition step. This protein has a weak ATPase activity. In Alkaliphilus oremlandii (strain OhILAs) (Clostridium oremlandii (strain OhILAs)), this protein is DNA mismatch repair protein MutS.